We begin with the raw amino-acid sequence, 368 residues long: Phosphate acyltransferase (368 aa).

The protein belongs to the PlsX family. In terms of assembly, homodimer. Probably interacts with PlsY.

It is found in the cytoplasm. It carries out the reaction a fatty acyl-[ACP] + phosphate = an acyl phosphate + holo-[ACP]. Its pathway is lipid metabolism; phospholipid metabolism. In terms of biological role, catalyzes the reversible formation of acyl-phosphate (acyl-PO(4)) from acyl-[acyl-carrier-protein] (acyl-ACP). This enzyme utilizes acyl-ACP as fatty acyl donor, but not acyl-CoA. This Cereibacter sphaeroides (strain ATCC 17025 / ATH 2.4.3) (Rhodobacter sphaeroides) protein is Phosphate acyltransferase.